Here is a 1240-residue protein sequence, read N- to C-terminus: Structural polyprotein (1240 aa).

Residues 1 to 35 (MFPYPTLNYPPMAPINPMAYRDPNPPRQVAPFRPP) form a necessary for nucleocapsid assembly and virus assembly region. The tract at residues 1-102 (MFPYPTLNYP…RKPKPGKRQR (102 aa)) is disordered. The segment covering 23–34 (PNPPRQVAPFRP) has biased composition (pro residues). The host transcription inhibition stretch occupies residues 36–69 (LAAQIEDLRRSIANLTLKQRAPNPPAGPPAKRKK). The Supraphysiological nuclear export signal signature appears at 43–50 (LRRSIANL). N-linked (GlcNAc...) asparagine; by host glycosylation occurs at N49. Residues 65–102 (AKRKKPAPKPKPAQAKKKRPPPPAKKQKRKPKPGKRQR) show a composition bias toward basic residues. The Nuclear localization signal motif lies at 66–70 (KRKKP). A binding to the viral RNA region spans residues 82-112 (KRPPPPAKKQKRKPKPGKRQRMCMKLESDKT). The ribosome-binding stretch occupies residues 97–111 (PGKRQRMCMKLESDK). S109 is subject to Phosphoserine. A Peptidase S3 domain is found at 111 to 260 (KTFPIMLNGQ…KDTPEGSEPW (150 aa)). A Phosphothreonine modification is found at T112. Residues H137, D159, and S211 each act as charge relay system in the active site. The functions as an uncleaved signal peptide for the precursor of protein E3/E2 stretch occupies residues 261 to 272 (SLATVMCVLANI). The Extracellular segment spans residues 261 to 682 (SLATVMCVLA…HEVVVYYYNR (422 aa)). 2 N-linked (GlcNAc...) asparagine; by host glycosylation sites follow: N271 and N638. A helical transmembrane segment spans residues 683–703 (YPLTTIIGLCTCVAIIMVSCV). Residues 704–743 (HPCGSFAGLRNLCITPYKLAPNAQVPILLALLCCIKPTRA) lie on the Cytoplasmic side of the membrane. 4 S-palmitoyl cysteine; by host lipidation sites follow: C706, C716, C736, and C737. Residues 715–735 (LCITPYKLAPNAQVPILLALL) form a transient transmembrane before p62-6K protein processing region. Over 744–758 (DDTLQVLNYLWNNNQ) the chain is Extracellular. A helical transmembrane segment spans residues 759–779 (NFFWMQTLIPLAALIVCMRIV). A topological domain (cytoplasmic) is located at residue R780. The helical transmembrane segment at 781-801 (CLFCCGPAFLLVCGAWAAAYE) threads the bilayer. The Extracellular segment spans residues 802–1216 (HTAVMPNKVG…WSWLKVLVGG (415 aa)). N-linked (GlcNAc...) asparagine; by host glycosylation occurs at N834. Cystine bridges form between C848/C913, C861/C893, C862/C895, and C867/C877. Residues 883–900 (VYPFMWGGAYCFCDTENT) form an E1 fusion peptide loop region. The N-linked (GlcNAc...) asparagine; by host glycan is linked to N933. Intrachain disulfides connect C1059–C1071, C1101–C1176, and C1106–C1180. A helical transmembrane segment spans residues 1217-1237 (TSAFIVLGLIATAVVALVLFF). The Cytoplasmic portion of the chain corresponds to 1238-1240 (HRH).

In terms of assembly, part of a tetrameric complex composed of host CRM1, host importin alpha/beta dimer and the viral capsid; this complex blocks the receptor-mediated transport through the nuclear pore. Interacts with host phosphatase PPP1CA; this interaction dephosphorylates the capsid protein, which increases its ability to bind to the viral genome. Interacts with host karyopherin KPNA4; this interaction allows the nuclear import of the viral capsid protein. Interacts with spike glycoprotein E2. Interacts with host IRAK1; the interaction leads to inhibition of IRAK1-dependent signaling. As to quaternary structure, the precursor of protein E3/E2 and E1 form a heterodimer shortly after synthesis. The precursor of protein E3/E2 and E1 form a heterodimer shortly after synthesis. Processing of the precursor of protein E3/E2 into E2 and E3 results in a heterodimer of the spike glycoproteins E2 and E1. Spike at virion surface are constituted of three E2-E1 heterodimers. After target cell attachment and endocytosis, E1 change conformation to form homotrimers. Interacts with 6K protein. In terms of assembly, processing of the precursor of protein E3/E2 into E2 and E3 results in a heterodimer of the spike glycoproteins E2 and E1. Spike at virion surface are constituted of three E2-E1 heterodimers. Interacts with 6K protein. As to quaternary structure, interacts with spike glycoprotein E1. Interacts with spike glycoprotein E2. Structural polyprotein: Specific enzymatic cleavages in vivo yield mature proteins. Capsid protein is auto-cleaved during polyprotein translation, unmasking a signal peptide at the N-terminus of the precursor of E3/E2. The remaining polyprotein is then targeted to the host endoplasmic reticulum, where host signal peptidase cleaves it into pE2, 6K and E1 proteins. pE2 is further processed to mature E3 and E2 by host furin in trans-Golgi vesicle. Post-translationally, phosphorylated on serine and threonine residues. In terms of processing, palmitoylated via thioester bonds. These palmitoylations may induce disruption of the C-terminus transmembrane. This would result in the reorientation of E2 C-terminus from lumenal to cytoplasmic side. N-glycosylated. Post-translationally, palmitoylated via thioester bonds.

Its subcellular location is the virion. The protein resides in the host cytoplasm. It localises to the host cell membrane. The protein localises to the host nucleus. It is found in the virion membrane. It carries out the reaction Autocatalytic release of the core protein from the N-terminus of the togavirus structural polyprotein by hydrolysis of a -Trp-|-Ser- bond.. In terms of biological role, forms an icosahedral capsid with a T=4 symmetry composed of 240 copies of the capsid protein surrounded by a lipid membrane through which penetrate 80 spikes composed of trimers of E1-E2 heterodimers. The capsid protein binds to the viral RNA genome at a site adjacent to a ribosome binding site for viral genome translation following genome release. Possesses a protease activity that results in its autocatalytic cleavage from the nascent structural protein. Following its self-cleavage, the capsid protein transiently associates with ribosomes, and within several minutes the protein binds to viral RNA and rapidly assembles into icosahedric core particles. The resulting nucleocapsid eventually associates with the cytoplasmic domain of the spike glycoprotein E2 at the cell membrane, leading to budding and formation of mature virions. In case of infection, new virions attach to target cells and after clathrin-mediated endocytosis their membrane fuses with the host endosomal membrane. This leads to the release of the nucleocapsid into the cytoplasm, followed by an uncoating event necessary for the genomic RNA to become accessible. The uncoating might be triggered by the interaction of capsid proteins with ribosomes. Binding of ribosomes would release the genomic RNA since the same region is genomic RNA-binding and ribosome-binding. Specifically inhibits interleukin-1 receptor-associated kinase 1/IRAK1-dependent signaling during viral entry, representing a means by which the alphaviruses may evade innate immune detection and activation prior to viral gene expression. Inhibits host transcription. Forms a tetrameric complex with XPO1/CRM1 and the nuclear import receptor importin. This complex blocks the central channel of host nuclear pores thereby inhibiting the receptor-mediated nuclear transport and thus the host mRNA and rRNA transcription. The inhibition of transcription is linked to a cytopathic effect on the host cell. Functionally, provides the signal sequence for the translocation of the precursor of protein E3/E2 to the host endoplasmic reticulum. Furin-cleaved E3 remains associated with spike glycoprotein E1 and mediates pH protection of the latter during the transport via the secretory pathway. After virion release from the host cell, the assembly protein E3 is gradually released in the extracellular space. Its function is as follows. Plays a role in viral attachment to target host cell, by binding to the cell receptor. Synthesized as a p62 precursor which is processed by furin at the cell membrane just before virion budding, giving rise to E2-E1 heterodimer. The p62-E1 heterodimer is stable, whereas E2-E1 is unstable and dissociate at low pH. p62 is processed at the last step, presumably to avoid E1 fusion activation before its final export to cell surface. E2 C-terminus contains a transitory transmembrane that would be disrupted by palmitoylation, resulting in reorientation of the C-terminal tail from lumenal to cytoplasmic side. This step is critical since E2 C-terminus is involved in budding by interacting with capsid proteins. This release of E2 C-terminus in cytoplasm occurs lately in protein export, and precludes premature assembly of particles at the endoplasmic reticulum membrane. Constitutive membrane protein involved in virus glycoprotein processing, cell permeabilization, and the budding of viral particles. Disrupts the calcium homeostasis of the cell, probably at the endoplasmic reticulum level. This leads to cytoplasmic calcium elevation. Because of its lipophilic properties, the 6K protein is postulated to influence the selection of lipids that interact with the transmembrane domains of the glycoproteins, which, in turn, affects the deformability of the bilayer required for the extreme curvature that occurs as budding proceeds. Present in low amount in virions, about 3% compared to viral glycoproteins. In terms of biological role, class II viral fusion protein. Fusion activity is inactive as long as E1 is bound to E2 in mature virion. After virus attachment to target cell and endocytosis, acidification of the endosome would induce dissociation of E1/E2 heterodimer and concomitant trimerization of the E1 subunits. This E1 trimer is fusion active, and promotes release of viral nucleocapsid in cytoplasm after endosome and viral membrane fusion. Efficient fusion requires the presence of cholesterol and sphingolipid in the target membrane. Fusion is optimal at levels of about 1 molecule of cholesterol per 2 molecules of phospholipids, and is specific for sterols containing a 3-beta-hydroxyl group. This chain is Structural polyprotein, found in Eastern equine encephalitis virus (strain va33[ten broeck]) (EEEV).